The primary structure comprises 195 residues: CDP-diacylglycerol--glycerol-3-phosphate 3-phosphatidyltransferase (195 aa).

Transmembrane regions (helical) follow at residues 7–24, 60–81, 134–150, and 157–173; these read ITVL…LFYL, FGAF…VLLV, MLAL…FTFW, and FLLI…LQYL.

Belongs to the CDP-alcohol phosphatidyltransferase class-I family.

It localises to the cell membrane. It catalyses the reaction a CDP-1,2-diacyl-sn-glycerol + sn-glycerol 3-phosphate = a 1,2-diacyl-sn-glycero-3-phospho-(1'-sn-glycero-3'-phosphate) + CMP + H(+). It functions in the pathway phospholipid metabolism; phosphatidylglycerol biosynthesis; phosphatidylglycerol from CDP-diacylglycerol: step 1/2. This protein catalyzes the committed step to the synthesis of the acidic phospholipids. The polypeptide is CDP-diacylglycerol--glycerol-3-phosphate 3-phosphatidyltransferase (pgsA) (Pseudomonas fluorescens).